The primary structure comprises 465 residues: Hydroxyacid-oxoacid transhydrogenase, mitochondrial (465 aa).

N6-acetyllysine is present on K443. S450 bears the Phosphoserine mark.

It belongs to the iron-containing alcohol dehydrogenase family. Hydroxyacid-oxoacid transhydrogenase subfamily. In terms of tissue distribution, expressed in white and brown adipose tissues, liver, and kidney. Expression is differentiation-dependent during in vitro brown and white adipogenesis.

Its subcellular location is the mitochondrion. The enzyme catalyses (S)-3-hydroxybutanoate + 2-oxoglutarate = (R)-2-hydroxyglutarate + acetoacetate. The catalysed reaction is 4-hydroxybutanoate + 2-oxoglutarate = (R)-2-hydroxyglutarate + succinate semialdehyde. Catalyzes the cofactor-independent reversible oxidation of gamma-hydroxybutyrate (GHB) to succinic semialdehyde (SSA) coupled to reduction of 2-ketoglutarate (2-KG) to D-2-hydroxyglutarate (D-2-HG). L-3-hydroxybutyrate (L-3-OHB) is also a substrate for HOT when using 2-KG as hydrogen acceptor, resulting in the formation of D-2-HG. The sequence is that of Hydroxyacid-oxoacid transhydrogenase, mitochondrial (Adhfe1) from Mus musculus (Mouse).